We begin with the raw amino-acid sequence, 874 residues long: Probable leucine--tRNA ligase, cytoplasmic (874 aa).

The short motif at 36–46 (PYMNGRLHLGH) is the 'HIGH' region element. A 'KMSKS' region motif is present at residues 544–548 (KMSKS). K547 serves as a coordination point for ATP.

This sequence belongs to the class-I aminoacyl-tRNA synthetase family.

The protein localises to the cytoplasm. The enzyme catalyses tRNA(Leu) + L-leucine + ATP = L-leucyl-tRNA(Leu) + AMP + diphosphate. This chain is Probable leucine--tRNA ligase, cytoplasmic, found in Encephalitozoon cuniculi (strain GB-M1) (Microsporidian parasite).